A 514-amino-acid polypeptide reads, in one-letter code: Ribonuclease Y (514 aa).

The chain crosses the membrane as a helical span at residues tyrosine 3–phenylalanine 23. The KH domain maps to threonine 204–leucine 289. The region spanning valine 330–alanine 423 is the HD domain.

Belongs to the RNase Y family.

It localises to the cell membrane. In terms of biological role, endoribonuclease that initiates mRNA decay. The polypeptide is Ribonuclease Y (Clostridium kluyveri (strain ATCC 8527 / DSM 555 / NBRC 12016 / NCIMB 10680 / K1)).